The chain runs to 216 residues: MELSRIPEGLVCSSGRPYHAKACFKATLHGFCPPFVLQQALKELLTPVLYDQFYCETPLSQKKAHVHRCRNRCVTFYWHCHCSSANSLQCAAAKKVANSVFYHSFIVMQNDNKMCPVPVCCDTWACIPFKPLGIVKQRRCTCYFFVMGGKFETEVLHVASEYSVKFLPFKPNVEIVCVICSCVDSPESCLKRVRRMMNCLRMVMCCSFVNADALQR.

In Pantherophis guttatus (Corn snake), this protein is Protein E4.2.